The primary structure comprises 37 residues: MIEPLLFGIVLGLIPVTLVGLFVAAYLQYRRGNQFGL.

A helical membrane pass occupies residues 5–25 (LLFGIVLGLIPVTLVGLFVAA).

This sequence belongs to the PetG family. As to quaternary structure, the 4 large subunits of the cytochrome b6-f complex are cytochrome b6, subunit IV (17 kDa polypeptide, PetD), cytochrome f and the Rieske protein, while the 4 small subunits are PetG, PetL, PetM and PetN. The complex functions as a dimer.

It localises to the plastid. It is found in the chloroplast thylakoid membrane. In terms of biological role, component of the cytochrome b6-f complex, which mediates electron transfer between photosystem II (PSII) and photosystem I (PSI), cyclic electron flow around PSI, and state transitions. PetG is required for either the stability or assembly of the cytochrome b6-f complex. The polypeptide is Cytochrome b6-f complex subunit 5 (Rhodomonas salina (Cryptomonas salina)).